Reading from the N-terminus, the 640-residue chain is SUMO-activating enzyme subunit 2 (640 aa).

Residues 24-29 (GAGGIG), Asp-48, 56-59 (NLNR), Lys-72, 95-96 (SI), and 117-122 (DNRAAR) contribute to the ATP site. 2 residues coordinate Zn(2+): Cys-158 and Cys-161. Lys-164 is covalently cross-linked (Glycyl lysine isopeptide (Lys-Gly) (interchain with G-Cter in SUMO1)). Cys-173 serves as the catalytic Glycyl thioester intermediate. Lys-190 is covalently cross-linked (Glycyl lysine isopeptide (Lys-Gly) (interchain with G-Cter in SUMO)). The interval 202–231 (ADQEVSPDRADPEAAWEPTEAEARARASNE) is disordered. Ser-207 bears the Phosphoserine mark. Residues 222 to 231 (AEARARASNE) show a composition bias toward basic and acidic residues. Residue Lys-236 forms a Glycyl lysine isopeptide (Lys-Gly) (interchain with G-Cter in SUMO1); alternate linkage. Residues Lys-236 and Lys-257 each participate in a glycyl lysine isopeptide (Lys-Gly) (interchain with G-Cter in SUMO2); alternate cross-link. Residues Lys-257 and Lys-271 each participate in a glycyl lysine isopeptide (Lys-Gly) (interchain with G-Cter in SUMO); alternate cross-link. The residue at position 271 (Lys-271) is an N6-acetyllysine; alternate. Lys-275 participates in a covalent cross-link: Glycyl lysine isopeptide (Lys-Gly) (interchain with G-Cter in SUMO). Lys-371 is covalently cross-linked (Glycyl lysine isopeptide (Lys-Gly) (interchain with G-Cter in SUMO2)). Lys-420 participates in a covalent cross-link: Glycyl lysine isopeptide (Lys-Gly) (interchain with G-Cter in SUMO1); alternate. Lys-420 participates in a covalent cross-link: Glycyl lysine isopeptide (Lys-Gly) (interchain with G-Cter in SUMO2); alternate. Cys-441 and Cys-444 together coordinate Zn(2+). Ser-507 carries the post-translational modification Phosphoserine. Lys-540 is covalently cross-linked (Glycyl lysine isopeptide (Lys-Gly) (interchain with G-Cter in SUMO2)). The span at 551–563 (PEKVGPKQAEDAA) shows a compositional bias: basic and acidic residues. Positions 551–640 (PEKVGPKQAE…EELDDVIALD (90 aa)) are disordered. Positions 565-582 (SITNGSDDGAQPSTSTAQ) are enriched in polar residues. Residues 583-597 (EQDDVLIVDSDEEDS) are compositionally biased toward acidic residues. Position 592 is a phosphoserine (Ser-592). The segment covering 606–630 (EERSRKRKLDEKENLSAKRSRIEQK) has biased composition (basic and acidic residues). Lys-611 participates in a covalent cross-link: Glycyl lysine isopeptide (Lys-Gly) (interchain with G-Cter in SUMO). Lys-613 participates in a covalent cross-link: Glycyl lysine isopeptide (Lys-Gly) (interchain with G-Cter in SUMO); alternate. An N6-acetyllysine; alternate modification is found at Lys-613. Glycyl lysine isopeptide (Lys-Gly) (interchain with G-Cter in SUMO) cross-links involve residues Lys-617 and Lys-623. Residues 631-640 (EELDDVIALD) show a composition bias toward acidic residues.

Belongs to the ubiquitin-activating E1 family. As to quaternary structure, heterodimer of SAE1 and UBA2/SAE2. The heterodimer corresponds to the two domains that are encoded on a single polypeptide chain in ubiquitin-activating enzyme E1. Interacts with UBE2I. Sumoylated with SUMO1 and SUMO2/3 and by UBC9. Sumoylation at Lys-236 inhibits enzymatic activity. Sumoylation at the C-terminal lysine cluster plays an essential role in nuclear trafficking.

It localises to the cytoplasm. The protein resides in the nucleus. Its pathway is protein modification; protein sumoylation. Its function is as follows. The heterodimer acts as an E1 ligase for SUMO1, SUMO2, SUMO3, and probably SUMO4. It mediates ATP-dependent activation of SUMO proteins followed by formation of a thioester bond between a SUMO protein and a conserved active site cysteine residue on UBA2/SAE2. The chain is SUMO-activating enzyme subunit 2 (UBA2) from Homo sapiens (Human).